The primary structure comprises 222 residues: Probable translocation protein y4yL (222 aa).

4 helical membrane passes run P6–V26, P52–A72, I158–M178, and M182–I202.

It belongs to the FliP/MopC/SpaP family.

Its subcellular location is the cell membrane. In terms of biological role, could be involved in the secretion of an unknown factor. This is Probable translocation protein y4yL from Sinorhizobium fredii (strain NBRC 101917 / NGR234).